Consider the following 506-residue polypeptide: AAA-ATPase At4g25835 (506 aa).

Positions 1 to 20 (MKEYWTSLASLLGVLAFCQS) are cleaved as a signal peptide. 244–251 (GPPGTGKS) serves as a coordination point for ATP. The segment at 462–506 (GKSRVQNVSLEEQENRAFDSLYAEENGGEEEEIEDNICKSSDDCS) is disordered. The span at 487–496 (NGGEEEEIED) shows a compositional bias: acidic residues. The segment covering 497–506 (NICKSSDDCS) has biased composition (basic and acidic residues).

This sequence belongs to the AAA ATPase family. BCS1 subfamily. Mg(2+) is required as a cofactor.

The enzyme catalyses ATP + H2O = ADP + phosphate + H(+). The protein is AAA-ATPase At4g25835 of Arabidopsis thaliana (Mouse-ear cress).